We begin with the raw amino-acid sequence, 589 residues long: Lipoprotein LpqB (589 aa).

A signal peptide spans 1–20; that stretch reads MMRGVLVIMRLLCLGMLFTG. Residue C21 is the site of N-palmitoyl cysteine attachment. C21 carries S-diacylglycerol cysteine lipidation.

The protein belongs to the LpqB lipoprotein family.

The protein resides in the cell membrane. In Mycobacterium leprae (strain TN), this protein is Lipoprotein LpqB.